The primary structure comprises 195 residues: AP-4-A phosphorylase (195 aa).

Positions 1 to 17 (MSDEDRTDRATEDHTIF) are enriched in basic and acidic residues. The disordered stretch occupies residues 1–20 (MSDEDRTDRATEDHTIFDRG). The HIT domain maps to 57-166 (PFTEIPQLSD…VPRWGGDANF (110 aa)). Positions 151-155 (HLHVH) match the Histidine triad motif motif. Residue His153 is the Tele-AMP-histidine intermediate of the active site.

In terms of assembly, homotetramer. A divalent metal cation serves as cofactor.

It carries out the reaction ADP + ATP + H(+) = P(1),P(4)-bis(5'-adenosyl) tetraphosphate + phosphate. In terms of biological role, catabolizes diadenosine 5',5'''-P1,P4-tetraphosphate (Ap4A) into ADP and ATP. In Mycobacterium tuberculosis (strain CDC 1551 / Oshkosh), this protein is AP-4-A phosphorylase.